A 1403-amino-acid chain; its full sequence is Nidogen-2 (1403 aa).

Positions Met-1–Ala-30 are cleaved as a signal peptide. The 167-residue stretch at Pro-108–Arg-274 folds into the NIDO domain. A disordered region spans residues Glu-323–Glu-403. O-linked (Xyl...) (chondroitin sulfate) serine glycosylation is found at Ser-386 and Ser-475. Residues Ser-386–Gln-395 show a composition bias toward polar residues. Positions Asn-507–Leu-547 constitute an EGF-like 1 domain. Cystine bridges form between Cys-511–Cys-524, Cys-518–Cys-533, and Cys-535–Cys-546. In terms of domain architecture, Nidogen G2 beta-barrel spans Ala-551–Val-781. Residues Asn-681, Asn-716, and Asn-726 are each glycosylated (N-linked (GlcNAc...) asparagine). In terms of domain architecture, EGF-like 2 spans Gly-782–Val-823. Intrachain disulfides connect Cys-786/Cys-799, Cys-793/Cys-809, Cys-811/Cys-822, Cys-828/Cys-841, Cys-835/Cys-850, Cys-852/Cys-865, Cys-875/Cys-890, Cys-882/Cys-900, Cys-902/Cys-913, Cys-919/Cys-930, Cys-924/Cys-939, Cys-941/Cys-952, Cys-968/Cys-991, Cys-1002/Cys-1009, Cys-1011/Cys-1033, Cys-1047/Cys-1071, Cys-1082/Cys-1089, and Cys-1091/Cys-1112. The region spanning Asp-824–Gln-862 is the EGF-like 3; calcium-binding domain. The region spanning Pro-871–Ser-914 is the EGF-like 4 domain. The EGF-like 5; calcium-binding domain maps to Asp-915–Thr-953. A Cell attachment site motif is present at residues Arg-946–Asp-948. 2 Thyroglobulin type-1 domains span residues Leu-965–Cys-1033 and Arg-1044–Cys-1112. A disordered region spans residues Gly-1021 to Pro-1043. Residues Gly-1027–Thr-1040 show a composition bias toward pro residues. N-linked (GlcNAc...) asparagine glycosylation is present at Asn-1152. LDL-receptor class B repeat units follow at residues Arg-1182–Arg-1225, Arg-1226–Arg-1268, Gly-1269–Ser-1313, Lys-1314–His-1355, and Tyr-1357–Gly-1401. Arg-1336 is subject to Omega-N-methylarginine.

As to quaternary structure, interacts with LAMA2. Interacts with COL13A1. Interacts with EFEMP2. Highly N- and O-glycosylated.

Its subcellular location is the secreted. It is found in the extracellular space. The protein localises to the extracellular matrix. It localises to the basement membrane. Its function is as follows. Cell adhesion glycoprotein. Might be involved in osteoblast differentiation. It probably has a role in cell-extracellular matrix interactions. The protein is Nidogen-2 (Nid2) of Mus musculus (Mouse).